The following is a 448-amino-acid chain: Tumor necrosis factor receptor superfamily member EDAR (448 aa).

Residues 1 to 26 (MAHVGDCKWMSWLPVLVVSLMCSAKA) form the signal peptide. The Extracellular segment spans residues 27-187 (EDSNCGENEY…LSGQGHLATA (161 aa)). 3 TNFR-Cys repeats span residues 30–71 (NCGE…DYGC), 73–113 (PCPA…DAEC), and 115–150 (PCLP…ECVG). Disulfide bonds link C31-C44, C47-C60, C50-C71, C74-C87, C93-C113, and C135-C148. A glycan (N-linked (GlcNAc...) asparagine) is linked at N38. A helical transmembrane segment spans residues 188 to 208 (LIIAMSTIFIMAIAIVLIIMF). The Cytoplasmic segment spans residues 209–448 (YIMKTKPSAP…PPASPPPAAS (240 aa)). Residues 220–229 (CCSSPPGKSA) show a composition bias toward low complexity. A disordered region spans residues 220–297 (CCSSPPGKSA…EEPAPDKQGS (78 aa)). Polar residues predominate over residues 258–283 (LTATPTKTPKSENDASSENEQLLSRS). One can recognise a Death domain in the interval 358–431 (RMLSSTYNSE…DAVESLCADI (74 aa)).

As to quaternary structure, binds to EDARADD. Associates with TRAF1, TRAF2, TRAF3 and NIK.

The protein resides in the membrane. Functionally, receptor for EDA isoform TAA, but not for EDA isoform TA-2. May mediate the activation of NF-kappa-B and JNK. May promote caspase-independent cell death. The polypeptide is Tumor necrosis factor receptor superfamily member EDAR (Edar) (Mus musculus (Mouse)).